We begin with the raw amino-acid sequence, 111 residues long: Disintegrin DS-AN (111 aa).

The first 20 residues, M1–C20, serve as a signal peptide directing secretion. A propeptide spanning residues I21–M47 is cleaved from the precursor. The Disintegrin domain occupies M47 to D111. Disulfide bonds link C53/C76, C67/C73, C72/C97, and C85/C104. Residues R89 to D91 carry the Cell attachment site motif.

As to quaternary structure, heterodimer; disulfide-linked.

It localises to the secreted. Its function is as follows. Inhibits ADP-induced platelet aggregation in human platelet-rich plasma (IC(50) is 8 uM). The sequence is that of Disintegrin DS-AN from Atheris nitschei (Great lakes bush viper).